Reading from the N-terminus, the 293-residue chain is MSFERFFSAEEILIWRKQELSKGGRAVDLDWLLDIGGGLGWSTLQELKIFQSSFHKLDLSLEELSLIWMRHLSDQIPLQHLVGKCPWRDFELKVNSSALIPRQETEILIDIALKKVDAGLMKYGRWADLGTGSGALAVALARALPLWEGHAADCCNDALALAESNINTLTENANVSLHLGDWWEPLKPWWGNFDLVVANPPYIPKTHLSELDPVVRDHEPILALSGGDDGMDSCRKVIKGAMKGLRSGGWLLLEHNFDQSEQALNLMVDSGFLEVDFENDLEGVRRFGLALRP.

S-adenosyl-L-methionine contacts are provided by residues Gly130 to Gly134, Asp153, Trp182, and Asn199. Asn199–Tyr202 lines the substrate pocket.

The protein belongs to the protein N5-glutamine methyltransferase family. PrmC subfamily.

The catalysed reaction is L-glutaminyl-[peptide chain release factor] + S-adenosyl-L-methionine = N(5)-methyl-L-glutaminyl-[peptide chain release factor] + S-adenosyl-L-homocysteine + H(+). In terms of biological role, methylates the class 1 translation termination release factors RF1/PrfA and RF2/PrfB on the glutamine residue of the universally conserved GGQ motif. The sequence is that of Release factor glutamine methyltransferase from Prochlorococcus marinus (strain SARG / CCMP1375 / SS120).